Here is a 419-residue protein sequence, read N- to C-terminus: uncharacterized protein (419 aa).

11 helical membrane-spanning segments follow: residues 1–21 (MTTV…FLIL), 24–44 (VSPA…GGAD), 66–86 (ILAA…NSIT), 101–121 (ALAL…VAVI), 174–194 (SVMM…YFLA), 216–236 (NLPS…LLAL), 242–262 (IKVD…FCMG), 280–300 (PVAI…NSGL), 311–331 (SGLP…LATA), 349–369 (LELG…ATVF), and 396–416 (IPYE…IFGV).

Belongs to the CitM (TC 2.A.11) transporter family.

It is found in the cell membrane. This is an uncharacterized protein from Haemophilus influenzae (strain ATCC 51907 / DSM 11121 / KW20 / Rd).